Reading from the N-terminus, the 344-residue chain is Dihydroorotase (344 aa).

Zn(2+) contacts are provided by H14 and H16. Residues 16–18 (HLR) and N42 each bind substrate. Zn(2+) contacts are provided by K100, H137, and H175. Position 100 is an N6-carboxylysine (K100). Position 137 (H137) interacts with substrate. L220 contacts substrate. D248 lines the Zn(2+) pocket. D248 is a catalytic residue. Substrate-binding residues include H252 and A264.

The protein belongs to the metallo-dependent hydrolases superfamily. DHOase family. Class II DHOase subfamily. As to quaternary structure, homodimer. Requires Zn(2+) as cofactor.

It catalyses the reaction (S)-dihydroorotate + H2O = N-carbamoyl-L-aspartate + H(+). It participates in pyrimidine metabolism; UMP biosynthesis via de novo pathway; (S)-dihydroorotate from bicarbonate: step 3/3. Its function is as follows. Catalyzes the reversible cyclization of carbamoyl aspartate to dihydroorotate. This chain is Dihydroorotase, found in Ralstonia nicotianae (strain ATCC BAA-1114 / GMI1000) (Ralstonia solanacearum).